The chain runs to 313 residues: Ornithine carbamoyltransferase (313 aa).

Residues 57–60 (STRT), Q84, R108, and 135–138 (HPTQ) contribute to the carbamoyl phosphate site. Residues N167, D231, and 235–236 (SM) each bind L-ornithine. Residues 272-273 (CL) and R300 contribute to the carbamoyl phosphate site.

It belongs to the aspartate/ornithine carbamoyltransferase superfamily. OTCase family.

It localises to the cytoplasm. The enzyme catalyses carbamoyl phosphate + L-ornithine = L-citrulline + phosphate + H(+). The protein operates within amino-acid biosynthesis; L-arginine biosynthesis; L-arginine from L-ornithine and carbamoyl phosphate: step 1/3. Functionally, reversibly catalyzes the transfer of the carbamoyl group from carbamoyl phosphate (CP) to the N(epsilon) atom of ornithine (ORN) to produce L-citrulline. The protein is Ornithine carbamoyltransferase of Caldanaerobacter subterraneus subsp. tengcongensis (strain DSM 15242 / JCM 11007 / NBRC 100824 / MB4) (Thermoanaerobacter tengcongensis).